The sequence spans 318 residues: NAD kinase (318 aa).

Asp84 acts as the Proton acceptor in catalysis. Residues 84-85 (DG), Arg89, 159-160 (NE), Arg170, Asp189, and 200-205 (TAYAFS) contribute to the NAD(+) site.

This sequence belongs to the NAD kinase family. It depends on a divalent metal cation as a cofactor.

The protein resides in the cytoplasm. It carries out the reaction NAD(+) + ATP = ADP + NADP(+) + H(+). Functionally, involved in the regulation of the intracellular balance of NAD and NADP, and is a key enzyme in the biosynthesis of NADP. Catalyzes specifically the phosphorylation on 2'-hydroxyl of the adenosine moiety of NAD to yield NADP. This chain is NAD kinase, found in Cutibacterium acnes (strain DSM 16379 / KPA171202) (Propionibacterium acnes).